The sequence spans 530 residues: Bifunctional purine biosynthesis protein PurH (530 aa).

The 148-residue stretch at 1-148 folds into the MGS-like domain; that stretch reads MNNARPIRRA…KNHKDVTIVV (148 aa).

This sequence belongs to the PurH family.

The catalysed reaction is (6R)-10-formyltetrahydrofolate + 5-amino-1-(5-phospho-beta-D-ribosyl)imidazole-4-carboxamide = 5-formamido-1-(5-phospho-D-ribosyl)imidazole-4-carboxamide + (6S)-5,6,7,8-tetrahydrofolate. It catalyses the reaction IMP + H2O = 5-formamido-1-(5-phospho-D-ribosyl)imidazole-4-carboxamide. It functions in the pathway purine metabolism; IMP biosynthesis via de novo pathway; 5-formamido-1-(5-phospho-D-ribosyl)imidazole-4-carboxamide from 5-amino-1-(5-phospho-D-ribosyl)imidazole-4-carboxamide (10-formyl THF route): step 1/1. Its pathway is purine metabolism; IMP biosynthesis via de novo pathway; IMP from 5-formamido-1-(5-phospho-D-ribosyl)imidazole-4-carboxamide: step 1/1. The protein is Bifunctional purine biosynthesis protein PurH of Aliivibrio fischeri (strain MJ11) (Vibrio fischeri).